Consider the following 201-residue polypeptide: MNAFYNKEGVGDTLLISLQDVTREQLGYEKHGDVVKIFNNETKETTGFNIFNASSYLTIDENGPVALSETFVQDVNEILNRNGVEETLVVDLSPKFVVGYVESKEKHPNADKLSVCKVNVGEETLQIVCGAPNVDQGQKVVVAKVGAVMPSGLVIKDAELRGVPSSGMICSAKELDLPDAPAEKGILVLEGDYEAGDAFQF.

The 111-residue stretch at 90–200 (VDLSPKFVVG…GDYEAGDAFQ (111 aa)) folds into the tRNA-binding domain.

In Bacillus subtilis (strain 168), this protein is Putative tRNA-binding protein YtpR (ytpR).